The sequence spans 209 residues: Large ribosomal subunit protein uL3 (209 aa).

This sequence belongs to the universal ribosomal protein uL3 family. As to quaternary structure, part of the 50S ribosomal subunit. Forms a cluster with proteins L14 and L19.

Functionally, one of the primary rRNA binding proteins, it binds directly near the 3'-end of the 23S rRNA, where it nucleates assembly of the 50S subunit. This chain is Large ribosomal subunit protein uL3, found in Pelobacter propionicus (strain DSM 2379 / NBRC 103807 / OttBd1).